Here is a 513-residue protein sequence, read N- to C-terminus: Light-independent protochlorophyllide reductase subunit B (513 aa).

Asp36 is a binding site for [4Fe-4S] cluster. Asp274 (proton donor) is an active-site residue. 409 to 410 is a substrate binding site; it reads GL. The segment at 426-457 is disordered; that stretch reads DAAGPSHHGGHSPKPQAAEPAPQAAPQPENTG. Residues 440-454 show a composition bias toward low complexity; the sequence is PQAAEPAPQAAPQPE.

Belongs to the ChlB/BchB/BchZ family. Protochlorophyllide reductase is composed of three subunits; BchL, BchN and BchB. Forms a heterotetramer of two BchB and two BchN subunits. Requires [4Fe-4S] cluster as cofactor.

The catalysed reaction is chlorophyllide a + oxidized 2[4Fe-4S]-[ferredoxin] + 2 ADP + 2 phosphate = protochlorophyllide a + reduced 2[4Fe-4S]-[ferredoxin] + 2 ATP + 2 H2O. It participates in porphyrin-containing compound metabolism; bacteriochlorophyll biosynthesis (light-independent). Its function is as follows. Component of the dark-operative protochlorophyllide reductase (DPOR) that uses Mg-ATP and reduced ferredoxin to reduce ring D of protochlorophyllide (Pchlide) to form chlorophyllide a (Chlide). This reaction is light-independent. The NB-protein (BchN-BchB) is the catalytic component of the complex. The chain is Light-independent protochlorophyllide reductase subunit B from Roseobacter denitrificans (strain ATCC 33942 / OCh 114) (Erythrobacter sp. (strain OCh 114)).